The sequence spans 128 residues: Ribonuclease P protein component (128 aa).

This sequence belongs to the RnpA family. In terms of assembly, consists of a catalytic RNA component (M1 or rnpB) and a protein subunit.

It catalyses the reaction Endonucleolytic cleavage of RNA, removing 5'-extranucleotides from tRNA precursor.. RNaseP catalyzes the removal of the 5'-leader sequence from pre-tRNA to produce the mature 5'-terminus. It can also cleave other RNA substrates such as 4.5S RNA. The protein component plays an auxiliary but essential role in vivo by binding to the 5'-leader sequence and broadening the substrate specificity of the ribozyme. This Prochlorococcus marinus (strain NATL1A) protein is Ribonuclease P protein component.